Here is a 265-residue protein sequence, read N- to C-terminus: Cyclin-C (265 aa).

Residues 48-151 form the Cyclin N-terminal domain; sequence IQVLGEQLKL…LLENLDCCLI (104 aa).

The protein belongs to the cyclin family. Cyclin C subfamily. In terms of assembly, component of the Cdk8 module of the Mediator complex.

Its subcellular location is the nucleus. Its function is as follows. Component of the Mediator complex, a coactivator involved in regulated gene transcription of nearly all RNA polymerase II-dependent genes. Mediator functions as a bridge to convey information from gene-specific regulatory proteins to the basal RNA polymerase II transcription machinery. Mediator is recruited to promoters by direct interactions with regulatory proteins and serves as a scaffold for the assembly of a functional preinitiation complex with RNA polymerase II and the general transcription factors. Binds to and activates cyclin-dependent kinase Cdk8 that phosphorylates the CTD (C-terminal domain) of the large subunit of RNA polymerase II (RNAp II), which may inhibit the formation of a transcription initiation complex. In Aedes aegypti (Yellowfever mosquito), this protein is Cyclin-C (CycC).